Consider the following 404-residue polypeptide: Endophilin-B2 (404 aa).

At M1 the chain carries N-acetylmethionine. The interval 1 to 27 is membrane-binding amphipathic helix; it reads MDFNMKKLASDAGIFFTRAVQFTEEKF. Position 10 is a phosphoserine (S10). Residues 24-291 form the BAR domain; the sequence is EEKFGQAEKT…LGSSQGAIFP (268 aa). Residues 209 to 239 adopt a coiled-coil conformation; it reads SASALWNDEVDKAEQELRAAQTEFDRQAEVT. In terms of domain architecture, SH3 spans 344 to 404; the sequence is SGTRKARVLY…VPVTYLELLS (61 aa). The residue at position 404 (S404) is a Phosphoserine.

It belongs to the endophilin family. Homodimer, and heterodimer with SH3GLB1.

It is found in the cytoplasm. The chain is Endophilin-B2 from Rattus norvegicus (Rat).